The chain runs to 311 residues: Lipoyl synthase (311 aa).

C47, C52, C58, C73, C77, C80, and S286 together coordinate [4Fe-4S] cluster. The 218-residue stretch at 59 to 276 folds into the Radical SAM core domain; sequence WSRHTATYLA…RSVGESLGLF (218 aa).

Belongs to the radical SAM superfamily. Lipoyl synthase family. Requires [4Fe-4S] cluster as cofactor.

It is found in the cytoplasm. The catalysed reaction is [[Fe-S] cluster scaffold protein carrying a second [4Fe-4S](2+) cluster] + N(6)-octanoyl-L-lysyl-[protein] + 2 oxidized [2Fe-2S]-[ferredoxin] + 2 S-adenosyl-L-methionine + 4 H(+) = [[Fe-S] cluster scaffold protein] + N(6)-[(R)-dihydrolipoyl]-L-lysyl-[protein] + 4 Fe(3+) + 2 hydrogen sulfide + 2 5'-deoxyadenosine + 2 L-methionine + 2 reduced [2Fe-2S]-[ferredoxin]. The protein operates within protein modification; protein lipoylation via endogenous pathway; protein N(6)-(lipoyl)lysine from octanoyl-[acyl-carrier-protein]: step 2/2. In terms of biological role, catalyzes the radical-mediated insertion of two sulfur atoms into the C-6 and C-8 positions of the octanoyl moiety bound to the lipoyl domains of lipoate-dependent enzymes, thereby converting the octanoylated domains into lipoylated derivatives. The polypeptide is Lipoyl synthase (Chlamydia trachomatis serovar A (strain ATCC VR-571B / DSM 19440 / HAR-13)).